A 212-amino-acid chain; its full sequence is Adenylate kinase (212 aa).

An ATP-binding site is contributed by 10–15; that stretch reads GAGKGT. Residues 30–59 form an NMP region; it reads STGDMFRAAMANQTEMGTLAKSFIDKGELV. AMP contacts are provided by residues T31, R36, 57 to 59, 86 to 89, and Q93; these read ELV and GYPR. The tract at residues 127–159 is LID; sequence GRIINRKTGETYHKVFNPPADYNEDDYYQREDD. ATP is bound by residues R128 and 137–138; that span reads TY. AMP is bound by residues R156 and R167. An ATP-binding site is contributed by Q195.

Belongs to the adenylate kinase family. Monomer.

It localises to the cytoplasm. It catalyses the reaction AMP + ATP = 2 ADP. It functions in the pathway purine metabolism; AMP biosynthesis via salvage pathway; AMP from ADP: step 1/1. Catalyzes the reversible transfer of the terminal phosphate group between ATP and AMP. Plays an important role in cellular energy homeostasis and in adenine nucleotide metabolism. This Streptococcus mutans serotype c (strain ATCC 700610 / UA159) protein is Adenylate kinase.